Here is a 66-residue protein sequence, read N- to C-terminus: Large ribosomal subunit protein bL35 (66 aa).

2 stretches are compositionally biased toward basic residues: residues 1 to 15 (MPKLKTKSGAKKRFK) and 24 to 40 (HAQRGKRHGMIKRTKKQ). The disordered stretch occupies residues 1 to 40 (MPKLKTKSGAKKRFKVTGTGKVMHAQRGKRHGMIKRTKKQ).

It belongs to the bacterial ribosomal protein bL35 family.

The chain is Large ribosomal subunit protein bL35 from Bradyrhizobium sp. (strain ORS 278).